The chain runs to 222 residues: Ribonuclease 3 (222 aa).

The region spanning 3-125 (SQSVAKKLNH…LFGAIYLDAG (123 aa)) is the RNase III domain. Residue Glu-38 coordinates Mg(2+). The active site involves Asp-42. Residues Asp-111 and Glu-114 each coordinate Mg(2+). Residue Glu-114 is part of the active site. The DRBM domain occupies 152-222 (DAKTRLQEWL…AEKALKELLA (71 aa)).

The protein belongs to the ribonuclease III family. As to quaternary structure, homodimer. It depends on Mg(2+) as a cofactor.

The protein resides in the cytoplasm. The enzyme catalyses Endonucleolytic cleavage to 5'-phosphomonoester.. In terms of biological role, digests double-stranded RNA. Involved in the processing of primary rRNA transcript to yield the immediate precursors to the large and small rRNAs (23S and 16S). Processes some mRNAs, and tRNAs when they are encoded in the rRNA operon. Processes pre-crRNA and tracrRNA of type II CRISPR loci if present in the organism. This chain is Ribonuclease 3, found in Dechloromonas aromatica (strain RCB).